A 411-amino-acid polypeptide reads, in one-letter code: SH3 and cysteine-rich domain-containing protein 2 (411 aa).

Residues 1–29 (MTEMSEKENEPDDAATHSPPGTVSALQET) are disordered. Positions 19 to 29 (PPGTVSALQET) are enriched in polar residues. Ser-48 carries the post-translational modification Phosphoserine. The tract at residues 64–95 (TEVLLTPPTPLPPPSPPPTASDRGLATPSPSP) is disordered. A compositionally biased stretch (pro residues) spans 70–82 (PPTPLPPPSPPPT). Residues 110–161 (LHSFQEHVFKRASPCELCHQLIVGNSKQGLRCKMCKVSVHLWCSEEISHQQC) form a Phorbol-ester/DAG-type zinc finger. Disordered stretches follow at residues 174–203 (SSPL…KVDP) and 219–288 (RSSF…ATLR). Positions 219 to 232 (RSSFSSTSESPTRS) are enriched in low complexity. SH3 domains lie at 292–351 (GPMY…RVRP) and 354–411 (NVWR…LTEI).

As to quaternary structure, interacts (via SH3 domains) with CACNA1S. Interacts (via SH3 domains) with CACNA1C. Has much lower affinity for CACNA1C than for CACNA1S.

Its subcellular location is the cytoplasm. It is found in the cytosol. The protein localises to the cell membrane. The protein resides in the sarcolemma. Functionally, plays a redundant role in promoting the expression of calcium channel CACNA1S at the cell membrane, and thereby contributes to increased channel activity. Slows down the inactivation rate of the calcium channel CACNA1C. The chain is SH3 and cysteine-rich domain-containing protein 2 (STAC2) from Homo sapiens (Human).